The following is a 284-amino-acid chain: MATSSTFSSLLPSPPALLSDHRSPPPSIRYSFSPLTTPKSSRLGFTVPEKRNLAANSSLVEVSIGGESDPPPSSSGSGGDDKQIALLKLKLLSVVSGLNRGLVASVDDLERAEVAAKELETAGGPVDLTDDLDKLQGKWRLLYSSAFSSRSLGGSRPGLPTGRLIPVTLGQVFQRIDVFSKDFDNIAEVELGAPWPFPPLEATATLAHKFELLGTCKIKITFEKTTVKTSGNLSQIPPFDIPRLPDSFRPSSNPGTGDFEVTYVDDTMRITRGDRGELRVFVIA.

Positions 1–11 are enriched in low complexity; it reads MATSSTFSSLL. Residues 1-47 are disordered; sequence MATSSTFSSLLPSPPALLSDHRSPPPSIRYSFSPLTTPKSSRLGFTV. The N-terminal 72 residues, 1–72, are a transit peptide targeting the chloroplast; the sequence is MATSSTFSSL…SIGGESDPPP (72 aa). 5 positions are modified to phosphoserine: Ser96, Ser105, Ser148, Ser151, and Ser155.

Belongs to the PAP/fibrillin family. As to quaternary structure, part of the Photosystem II light-harvesting complex (LHCII). Post-translationally, phosphorylated as part of a basal defense response.

The protein localises to the plastid. Its subcellular location is the chloroplast. The protein resides in the plastoglobule. Required for plastoglobule development and resistance to multiple stresses. Regulates plastoglobule osmiophilic content. May be involved in the transport of lipophilic antioxidants in and out of the plastoglobule. The chain is Plastid-lipid-associated protein 6, chloroplastic from Arabidopsis thaliana (Mouse-ear cress).